We begin with the raw amino-acid sequence, 57 residues long: Lantibiotic nukacin (57 aa).

A propeptide spanning residues 1 to 30 (MENSKVMKDIEVANLLEEVQEDELNEVLGA) is cleaved from the precursor. Residues 39 to 44 (TVSHDC) constitute a cross-link (beta-methyllanthionine (Thr-Cys)). 2 cross-links (lanthionine (Ser-Cys)) span residues 41–55 (SHDCHMNSFQFVFTC) and 48–56 (SFQFVFTCC). T54 is subject to 2,3-didehydrobutyrine.

In terms of processing, maturation of lantibiotics involves the enzymatic conversion of Thr, and Ser into dehydrated AA and the formation of thioether bonds with cysteine. This is followed by membrane translocation and cleavage of the modified precursor.

The protein resides in the secreted. Its function is as follows. Lanthionine-containing peptide antibiotic (lantibiotic) active on Gram-positive bacteria. The bactericidal activity of lantibiotics is based on depolarization of energized bacterial cytoplasmic membranes, initiated by the formation of aqueous transmembrane pores. The sequence is that of Lantibiotic nukacin from Staphylococcus simulans.